A 678-amino-acid chain; its full sequence is MTGPQQGKILLRLENVSREFITGEQTVRVLNNINLTLHSGEMVAIVGTSGSGKSTLMNILGCLDKPSAGEYWVAGRIPQYLGSDALAELRREHFGFIFQRYHLLNDLSARENVEIPAIYAGIDREERRKRAVNLLSRIGLAERLDYRPSQLSGGQQQRVSIARALMNGGDVILADEPTGALDTHSGNEVLNILKDLHQQGHTVVIVTHDMSIAEHAQRIIELKDGEIIADRPRDHAQEKPKMVDIPSVIDIPSMDEKISTGAQQETEIARKPLLTRWKVQYDRLHEAFKMAILAMAAQRLRTALTMLGIIIGIASVVSVVALGKGSQQQVLANINAMGTSTLEIFPGKDFGDMRSAAIHTLRDTDADVLAQQGYIHSVTPTVSTSVTLRYGNKSVSGTVNGVGEQYFLVRGYTIAQGMAFTRTSVNDLMQDAVIDENTRDKLFPNGETPLGKVILLGSLPCRVIGVAAKKQSGFGSDENLNVWIPYTTAMKRMLGQSYLKSITVRVNDDIDLANAEQGVIKLLSQRHGTQDFFVMNTDSIRQTIQATTSTMTLLVSMIAVISLIVGGIGVMNIMLVSVTERTKEIGVRMAVGARASDIMQQFLIEAVLVCLLGGSLGVALSLGIGLLFSLFSSNFSMVYSAASIITAFVCSSLIGVIFGFFPAKRAAEMDPIRALERE.

The ABC transporter domain occupies 11–249 (LRLENVSREF…PKMVDIPSVI (239 aa)). 47 to 54 (GTSGSGKS) contacts ATP. Transmembrane regions (helical) follow at residues 303–323 (ALTMLGIIIGIASVVSVVALG), 558–578 (IAVISLIVGGIGVMNIMLVSV), 608–628 (LVCLLGGSLGVALSLGIGLLF), and 641–661 (AASIITAFVCSSLIGVIFGFF).

This sequence belongs to the ABC transporter superfamily. Macrolide exporter (TC 3.A.1.122) family. In terms of assembly, homodimer. Part of the tripartite efflux system MacAB-TolC, which is composed of an inner membrane transporter, MacB, a periplasmic membrane fusion protein, MacA, and an outer membrane component, TolC. The complex forms a large protein conduit and can translocate molecules across both the inner and outer membranes. Interacts with MacA.

The protein localises to the cell inner membrane. In terms of biological role, part of the tripartite efflux system MacAB-TolC. MacB is a non-canonical ABC transporter that contains transmembrane domains (TMD), which form a pore in the inner membrane, and an ATP-binding domain (NBD), which is responsible for energy generation. Confers resistance against macrolides. The chain is Macrolide export ATP-binding/permease protein MacB 1 from Yersinia pestis bv. Antiqua (strain Nepal516).